The sequence spans 208 residues: Small ribosomal subunit protein uS4 (208 aa).

Positions 98–158 constitute an S4 RNA-binding domain; it reads RRLDNIVYRL…EKSRKVASIN (61 aa).

The protein belongs to the universal ribosomal protein uS4 family. Part of the 30S ribosomal subunit. Contacts protein S5. The interaction surface between S4 and S5 is involved in control of translational fidelity.

Its function is as follows. One of the primary rRNA binding proteins, it binds directly to 16S rRNA where it nucleates assembly of the body of the 30S subunit. With S5 and S12 plays an important role in translational accuracy. The chain is Small ribosomal subunit protein uS4 from Geotalea daltonii (strain DSM 22248 / JCM 15807 / FRC-32) (Geobacter daltonii).